The primary structure comprises 149 residues: UPF0260 protein Psyr_1567 (149 aa).

The protein belongs to the UPF0260 family.

This is UPF0260 protein Psyr_1567 from Pseudomonas syringae pv. syringae (strain B728a).